The primary structure comprises 130 residues: uncharacterized protein (130 aa).

This is an uncharacterized protein from Treponema pallidum (strain Nichols).